The chain runs to 220 residues: Large ribosomal subunit protein uL3 (220 aa).

The segment at phenylalanine 127–glycine 155 is disordered.

It belongs to the universal ribosomal protein uL3 family. In terms of assembly, part of the 50S ribosomal subunit. Forms a cluster with proteins L14 and L19.

One of the primary rRNA binding proteins, it binds directly near the 3'-end of the 23S rRNA, where it nucleates assembly of the 50S subunit. The polypeptide is Large ribosomal subunit protein uL3 (Staphylococcus aureus (strain JH9)).